The chain runs to 445 residues: Inward rectifier potassium channel 4 (445 aa).

Residues 1-55 are Cytoplasmic-facing; sequence MHGHNRNGQAHVPRRKRRNRFVKKNGQCNVYFANLSNKSQRYMADIFTTCVDTRW. The helical transmembrane segment at 56–80 threads the bilayer; the sequence is RYMLMIFSAAFLVSWLFFGLLFWWI. Residues 81 to 119 are Extracellular-facing; it reads AFFHGDLEASPSVPAVGGPGGNGGESPNAPKPCIMHVNG. Residues 120–131 constitute an intramembrane region (helical; Pore-forming); it reads FLGAFLFSVETQ. Positions 132–138 form an intramembrane region, pore-forming; the sequence is TTIGYGF. Residues 133–138 carry the Selectivity filter motif; it reads TIGYGF. At 139-147 the chain is on the extracellular side; the sequence is RCVTEECPL. The chain crosses the membrane as a helical span at residues 148–169; the sequence is AVIAVVVQSIVGCVIDSFMIGT. Residues 170–445 lie on the Cytoplasmic side of the membrane; that stretch reads IMAKMARPKK…NISYRRESRI (276 aa). The short motif at 443 to 445 is the PDZ-binding element; it reads SRI.

It belongs to the inward rectifier-type potassium channel (TC 1.A.2.1) family. KCNJ4 subfamily. Homomultimeric and heteromultimeric association with KCNJ2 and KCNJ12. Interacts with DLG2 and DLG4. Associates, via its PDZ-recognition domain, with a complex containing LIN7A, LIN7B, LIN7C, DLG1, CASK and APBA1. Interacts with TAX1BP3. TAX1BP3 competes with LIN7 family members for KCNJ4 binding. In terms of tissue distribution, highly expressed in the forebrain, moderately in skeletal muscle. Im olfactory bulb, specifically expressed at the postsynaptic membrane of dendritic spines of granule cells.

The protein localises to the cell membrane. Its subcellular location is the postsynaptic cell membrane. It is found in the cytoplasmic vesicle membrane. It carries out the reaction K(+)(in) = K(+)(out). In terms of biological role, inward rectifier potassium channels are characterized by a greater tendency to allow potassium to flow into the cell rather than out of it. Their voltage dependence is regulated by the concentration of extracellular potassium; as external potassium is raised, the voltage range of the channel opening shifts to more positive voltages. The inward rectification is mainly due to the blockage of outward current by internal magnesium. Can be blocked by extracellular barium and cesium. The chain is Inward rectifier potassium channel 4 (Kcnj4) from Mus musculus (Mouse).